The following is a 536-amino-acid chain: Keratin, type II cytoskeletal 4 (536 aa).

Positions 1 to 145 (MISRQSSVRG…DPEIQKIRTA (145 aa)) are head. R13 carries the omega-N-methylarginine modification. Positions 146 to 181 (EREQIKTLNNKFASFIDKVRFLEQQNKVLETKWNLL) are coil 1A. Residues 146 to 457 (EREQIKTLNN…KLLEGEECRM (312 aa)) enclose the IF rod domain. A linker 1 region spans residues 182–200 (QQQTTTTSPRNLDPFFETY). A coil 1B region spans residues 201–293 (INALRKNLDT…LYEAELSQMQ (93 aa)). The linker 12 stretch occupies residues 294–316 (THVSDTSVVLSMDNNRNLDLDGI). The coil 2 stretch occupies residues 317 to 454 (IAEVRAQYEE…TYRKLLEGEE (138 aa)). Residues 455 to 524 (CRMSGECKSA…TSSATITKRS (70 aa)) are tail. The tract at residues 515–536 (TSSATITKRSPRTRQDPDGLQP) is disordered. A compositionally biased stretch (basic and acidic residues) spans 527 to 536 (TRQDPDGLQP).

Belongs to the intermediate filament family. In terms of assembly, heterotetramer of two type I and two type II keratins. keratin-4 is generally associated with keratin-13.

This is Keratin, type II cytoskeletal 4 from Rattus norvegicus (Rat).